The primary structure comprises 427 residues: 3-phosphoshikimate 1-carboxyvinyltransferase (427 aa).

Positions 20, 21, and 25 each coordinate 3-phosphoshikimate. Phosphoenolpyruvate is bound at residue Lys-20. The phosphoenolpyruvate site is built by Gly-92 and Arg-120. 3-phosphoshikimate is bound by residues Ser-166, Gln-168, Asp-312, and Lys-339. Gln-168 is a binding site for phosphoenolpyruvate. The active-site Proton acceptor is the Asp-312. Arg-343 and Arg-385 together coordinate phosphoenolpyruvate.

It belongs to the EPSP synthase family. As to quaternary structure, monomer.

It is found in the cytoplasm. It catalyses the reaction 3-phosphoshikimate + phosphoenolpyruvate = 5-O-(1-carboxyvinyl)-3-phosphoshikimate + phosphate. The protein operates within metabolic intermediate biosynthesis; chorismate biosynthesis; chorismate from D-erythrose 4-phosphate and phosphoenolpyruvate: step 6/7. Catalyzes the transfer of the enolpyruvyl moiety of phosphoenolpyruvate (PEP) to the 5-hydroxyl of shikimate-3-phosphate (S3P) to produce enolpyruvyl shikimate-3-phosphate and inorganic phosphate. The chain is 3-phosphoshikimate 1-carboxyvinyltransferase from Streptococcus pneumoniae (strain Hungary19A-6).